The following is a 178-amino-acid chain: Bifunctional protein PyrR (178 aa).

Residues 99–111 carry the PRPP-binding motif; the sequence is VIIVDDVLYTCRT.

It belongs to the purine/pyrimidine phosphoribosyltransferase family. PyrR subfamily. Homodimer and homohexamer; in equilibrium.

It catalyses the reaction UMP + diphosphate = 5-phospho-alpha-D-ribose 1-diphosphate + uracil. Regulates transcriptional attenuation of the pyrimidine nucleotide (pyr) operon by binding in a uridine-dependent manner to specific sites on pyr mRNA. This disrupts an antiterminator hairpin in the RNA and favors formation of a downstream transcription terminator, leading to a reduced expression of downstream genes. Functionally, also displays a weak uracil phosphoribosyltransferase activity which is not physiologically significant. The polypeptide is Bifunctional protein PyrR (Clostridium perfringens (strain ATCC 13124 / DSM 756 / JCM 1290 / NCIMB 6125 / NCTC 8237 / Type A)).